The primary structure comprises 467 residues: Trigger factor (467 aa).

The PPIase FKBP-type domain occupies 162–243; sequence GDFVSIDLSA…LNSVKERHLP (82 aa). Over residues 426–435 the composition is skewed to acidic residues; the sequence is EEGNELDLDE. The segment at 426–467 is disordered; the sequence is EEGNELDLDELFGTQAGEEQGEQAEGTEATDEQSAKADAKAE. The segment covering 436 to 452 has biased composition (low complexity); sequence LFGTQAGEEQGEQAEGT. The segment covering 458-467 has biased composition (basic and acidic residues); sequence QSAKADAKAE.

Belongs to the FKBP-type PPIase family. Tig subfamily.

It localises to the cytoplasm. It carries out the reaction [protein]-peptidylproline (omega=180) = [protein]-peptidylproline (omega=0). Functionally, involved in protein export. Acts as a chaperone by maintaining the newly synthesized protein in an open conformation. Functions as a peptidyl-prolyl cis-trans isomerase. The protein is Trigger factor of Saccharopolyspora erythraea (strain ATCC 11635 / DSM 40517 / JCM 4748 / NBRC 13426 / NCIMB 8594 / NRRL 2338).